Reading from the N-terminus, the 105-residue chain is MKFLIVFVALFAVALAAPAAEEPTIVRSESDVGPESFKYDWETSDGQAAQAVGQLNDIGTENEAISVSGSYRFIADDGQTYQVNYIADKNGFQPQGAHLPVAPVA.

The signal sequence occupies residues 1 to 18 (MKFLIVFVALFAVALAAP). One can recognise a Chitin-binding type R&amp;R domain in the interval 34–103 (PESFKYDWET…PQGAHLPVAP (70 aa)).

Component of the cuticle of the larva. The polypeptide is Larval cuticle protein 65Ag1 (Drosophila melanogaster (Fruit fly)).